Consider the following 564-residue polypeptide: Ribulokinase (564 aa).

Belongs to the ribulokinase family.

It carries out the reaction D-ribulose + ATP = D-ribulose 5-phosphate + ADP + H(+). The catalysed reaction is L-ribulose + ATP = L-ribulose 5-phosphate + ADP + H(+). Its pathway is carbohydrate degradation; L-arabinose degradation via L-ribulose; D-xylulose 5-phosphate from L-arabinose (bacterial route): step 2/3. The chain is Ribulokinase from Anoxybacillus flavithermus (strain DSM 21510 / WK1).